A 342-amino-acid polypeptide reads, in one-letter code: Polycomb group RING finger protein 2 (342 aa).

The RING-type zinc-finger motif lies at 18–57 (CALCGGYFIDATTIVECLHSFCKTCIVRYLETNKYCPMCD). Residues Lys51 and Lys88 each participate in a glycyl lysine isopeptide (Lys-Gly) (interchain with G-Cter in SUMO2) cross-link. The short motif at 81 to 95 (KLVPGLFKDEMKRRR) is the Nuclear localization signal element. A Phosphothreonine; by PKA modification is found at Thr237. The interval 237–342 (TLPTVPTPSE…MTVNGAPCPP (106 aa)) is disordered. Residues 243–253 (TPSEGTNTSGA) are compositionally biased toward polar residues. The segment covering 263–318 (APSPATLPATSSSLPSPATPSHGSPSSHGPPATHPTSPTPPSTAAGTTTATNGGTS) has biased composition (low complexity). The span at 319–328 (NCLQTPSSTS) shows a compositional bias: polar residues. At Thr334 the chain carries Phosphothreonine; by PKA.

In terms of assembly, exists as both a monomer and homodimer. Component of a PRC1-like complex. Interacts with CBX8, RING1 and RNF2. Interacts with CBX7. Interacts with PHC2. In terms of processing, phosphorylated. Homodimer formation is regulated by phosphorylation with only unphosphorylated proteins forming homodimers. As to expression, expressed in embryonic stem cells. Expressed in a variety of tumor cells and in neural tissues.

The protein localises to the nucleus. Functionally, transcriptional repressor. Binds specifically to the DNA sequence 5'-GACTNGACT-3'. Has tumor suppressor activity. May play a role in control of cell proliferation and/or neural cell development. Regulates proliferation of early T progenitor cells by maintaining expression of HES1. Also plays a role in antero-posterior specification of the axial skeleton and negative regulation of the self-renewal activity of hematopoietic stem cells. Component of a Polycomb group (PcG) multiprotein PRC1-like complex, a complex class required to maintain the transcriptionally repressive state of many genes, including Hox genes, throughout development. PcG PRC1 complex acts via chromatin remodeling and modification of histones; it mediates monoubiquitination of histone H2A 'Lys-119', rendering chromatin heritably changed in its expressibility. Within the PRC1-like complex, regulates RNF2 ubiquitin ligase activity. In Mus musculus (Mouse), this protein is Polycomb group RING finger protein 2 (Pcgf2).